Here is a 175-residue protein sequence, read N- to C-terminus: Inorganic pyrophosphatase (175 aa).

Positions 30, 44, and 56 each coordinate substrate. Residues D66, D71, and D103 each contribute to the Mg(2+) site. Y142 contacts substrate.

It belongs to the PPase family. As to quaternary structure, homohexamer. Mg(2+) is required as a cofactor.

It is found in the cytoplasm. The catalysed reaction is diphosphate + H2O = 2 phosphate + H(+). Functionally, catalyzes the hydrolysis of inorganic pyrophosphate (PPi) forming two phosphate ions. This chain is Inorganic pyrophosphatase, found in Yersinia pestis.